Reading from the N-terminus, the 249-residue chain is 2,3-bisphosphoglycerate-dependent phosphoglycerate mutase (249 aa).

Substrate contacts are provided by residues 9–16 (RHGQSQWN), 22–23 (TG), R61, 88–91 (ERHY), K99, 115–116 (RR), and 184–185 (GN). H10 (tele-phosphohistidine intermediate) is an active-site residue. E88 (proton donor/acceptor) is an active-site residue.

This sequence belongs to the phosphoglycerate mutase family. BPG-dependent PGAM subfamily. In terms of assembly, homodimer.

The catalysed reaction is (2R)-2-phosphoglycerate = (2R)-3-phosphoglycerate. Its pathway is carbohydrate degradation; glycolysis; pyruvate from D-glyceraldehyde 3-phosphate: step 3/5. In terms of biological role, catalyzes the interconversion of 2-phosphoglycerate and 3-phosphoglycerate. The sequence is that of 2,3-bisphosphoglycerate-dependent phosphoglycerate mutase from Stenotrophomonas maltophilia (strain K279a).